The primary structure comprises 324 residues: ATP synthase subunit a 2 (324 aa).

Positions 1 to 33 are cleaved as a signal peptide; it reads MKRVNVFRSGVFSRLFALLLPFLLGINGLVYAS. The next 6 membrane-spanning stretches (helical) occupy residues 95-115, 157-177, 179-199, 224-244, 257-277, and 291-311; these read HVVM…LVGN, LPYL…GLVP, GATA…TFFI, ALWI…PFAL, IVIL…VAMF, and IFVA…FIGL.

It belongs to the ATPase A chain family. F-type ATPases have 2 components, CF(1) - the catalytic core - and CF(0) - the membrane proton channel. CF(1) has five subunits: alpha(3), beta(3), gamma(1), delta(1), epsilon(1). CF(0) has four main subunits: a, b, b' and c.

Its subcellular location is the cell inner membrane. In terms of biological role, key component of the proton channel; it plays a direct role in the translocation of protons across the membrane. This is ATP synthase subunit a 2 from Prosthecochloris aestuarii (strain DSM 271 / SK 413).